The chain runs to 368 residues: Zinc finger protein 24 (368 aa).

Lysine 22 is covalently cross-linked (Glycyl lysine isopeptide (Lys-Gly) (interchain with G-Cter in SUMO2)). Lysine 27 participates in a covalent cross-link: Glycyl lysine isopeptide (Lys-Gly) (interchain with G-Cter in SUMO1); alternate. A Glycyl lysine isopeptide (Lys-Gly) (interchain with G-Cter in SUMO2); alternate cross-link involves residue lysine 27. Residues 52–134 form the SCAN box domain; that stretch reads RQRFRQFGYQ…AVLEDLESEL (83 aa). Serine 132 and serine 142 each carry phosphoserine. Glycyl lysine isopeptide (Lys-Gly) (interchain with G-Cter in SUMO2) cross-links involve residues lysine 147, lysine 177, and lysine 236. Residues 251-273 form a C2H2-type 1 zinc finger; that stretch reads HICDECGKHFSQGSALILHQRIH. The segment at 251 to 301 is necessary and sufficient for nuclear localization; that stretch reads HICDECGKHFSQGSALILHQRIHSGEKPYGCVECGKAFSRSSILVQHQRVH. A Phosphoserine modification is found at serine 274. Residues lysine 277 and lysine 286 each participate in a glycyl lysine isopeptide (Lys-Gly) (interchain with G-Cter in SUMO2) cross-link. C2H2-type zinc fingers lie at residues 279-301, 307-329, and 335-357; these read YGCVECGKAFSRSSILVQHQRVH, YKCLECGKAFSQNSGLINHQRIH, and YECVQCGKSYSQSSNLFRHQRRH. Serine 292 carries the phosphoserine modification. The residue at position 335 (tyrosine 335) is a Phosphotyrosine. Glycyl lysine isopeptide (Lys-Gly) (interchain with G-Cter in SUMO2) cross-links involve residues lysine 361 and lysine 367.

Belongs to the krueppel C2H2-type zinc-finger protein family. Sumoylated. Widely expressed with highest levels in heart, brain, liver, skeletal muscle, kidney and testis and very low levels in spleen and lung.

The protein resides in the nucleus. Its function is as follows. Transcription factor required for myelination of differentiated oligodendrocytes. Required for the conversion of oligodendrocytes from the premyelinating to the myelinating state. In the developing central nervous system (CNS), involved in the maintenance in the progenitor stage by promoting the cell cycle. Specifically binds to the 5'-TCAT-3' DNA sequence. Has transcription repressor activity in vitro. The sequence is that of Zinc finger protein 24 from Mus musculus (Mouse).